We begin with the raw amino-acid sequence, 204 residues long: Imidazoleglycerol-phosphate dehydratase (204 aa).

Residues 183–204 (DPRMDGITPSTKGTLSESGDSQ) form a disordered region. Polar residues predominate over residues 190 to 204 (TPSTKGTLSESGDSQ).

This sequence belongs to the imidazoleglycerol-phosphate dehydratase family.

It localises to the cytoplasm. It catalyses the reaction D-erythro-1-(imidazol-4-yl)glycerol 3-phosphate = 3-(imidazol-4-yl)-2-oxopropyl phosphate + H2O. It functions in the pathway amino-acid biosynthesis; L-histidine biosynthesis; L-histidine from 5-phospho-alpha-D-ribose 1-diphosphate: step 6/9. The protein is Imidazoleglycerol-phosphate dehydratase of Alcanivorax borkumensis (strain ATCC 700651 / DSM 11573 / NCIMB 13689 / SK2).